The chain runs to 905 residues: MAYNGRDQEYGGHALQDLPAGSSQYHLPPQENDEEQGRGLLNSGYEQDRLGARTPPDRPVSAYSLTESYAPGASSAMPGQGPTGYGDTGGSFGQFGNLDANAPFPRPDSAFDPEDSWVERQQQPQMGGGGGLGRSKTRKIKLVQGSVLSIDYPVPSAIKNAVQPQYRDAESGTEEFHKMRYTAATCDPNDFTLKNGYDLRPRMYNRHTELLIAITYYNEDKVLLARTLHHTMQNIRDIVNLKKSTFWNKGGPAWQKIVVCLVFDGIDKADKNTLDVLATVGVYQDGVIKKDVDGKETVAHIFEYTSQLSVTPNQQLIRPTNEGSQNLPPVQMIFCLKQKNTKKINSHRWLFNAFGRILNPEVCILLDAGTKPSPRSLLALWEGFYNDKDLGGACGEIHAMLGKGGKKLFNPLVAVQNFEYKISNILDKPLESSFGYVSVLPGAFSAYRFRAIMGRPLEQYFHGDHTLSKMLGKKGIDGMNIFKKNMFLAEDRILCFELVAKAGQKWHLSYIKAAKGETDVPEGAAEFISQRRRWLNGSFAATLYSLMHFGRMYKSGHNIIRMFFLHIQLIYTTLNTMFAWFSLGSYWLTTSVIMDLVGKPNATSGVHAWPFGDTGTPIVNALLQYLYLAFVMLQFILALGNRPKGSKFTYIASFMVFGLIQGYILVLSAYLVVRAFDTPIGDQISFASTDAFLNSFFGGSSAGGVILVALITIYGLNFIASFMYLDPWHMFHSFPYYLVLMSTYINILMVYAFNNWHDVSWGTKGSDKAEALPSAHVTKGEKNEVVVEEVEKEQEDIDSQFEQTVRRALAPFKEEEEVEKADVEDGYKSFRTGLVVCWLFGNILLIVCITSTNFDNLGWGEPATERKAHYFQFLLYATAVLSLVRFFGFLWFLGRTGIMCCFSRN.

Basic and acidic residues predominate over residues Met1–Tyr10. The interval Met1–Lys136 is disordered. A compositionally biased stretch (gly residues) spans Gly81–Gly93. The N-linked (GlcNAc...) asparagine glycan is linked to Asn536. The chain crosses the membrane as a helical span at residues Met562–Gly584. Residue Asn601 is glycosylated (N-linked (GlcNAc...) asparagine). The next 6 membrane-spanning stretches (helical) occupy residues Ile618–Ala638, Ser653–Val673, Val705–Leu725, Ser733–Phe753, Thr832–Thr852, and Phe873–Leu893.

This sequence belongs to the chitin synthase family. Class III subfamily.

The protein localises to the cell membrane. It catalyses the reaction [(1-&gt;4)-N-acetyl-beta-D-glucosaminyl](n) + UDP-N-acetyl-alpha-D-glucosamine = [(1-&gt;4)-N-acetyl-beta-D-glucosaminyl](n+1) + UDP + H(+). Its function is as follows. Polymerizes chitin, a structural polymer of the cell wall and septum, by transferring the sugar moiety of UDP-GlcNAc to the non-reducing end of the growing chitin polymer. Plays essential functions in fungal survival and host infection. In Gibberella zeae (strain ATCC MYA-4620 / CBS 123657 / FGSC 9075 / NRRL 31084 / PH-1) (Wheat head blight fungus), this protein is Chitin synthase 3B.